The sequence spans 525 residues: uncharacterized protein (525 aa).

The next 2 membrane-spanning stretches (helical) occupy residues 36-56 (AVAA…TLAL) and 61-81 (ALPA…AAAI). In terms of domain architecture, PAC spans 173–228 (SAVDIRLERTSADGPQFAHIYCEMTPLRDAEGNLLAIVAQSRDVSEEARLQAEAAA). The 221-residue stretch at 246 to 466 (AVSHELRTPL…VIVVTIPSDA (221 aa)) folds into the Histidine kinase domain. At histidine 249 the chain carries Phosphohistidine; by autocatalysis. The disordered stretch occupies residues 506–525 (LHTGEIGREGGHGAAQAKTA).

The protein resides in the cell membrane. The enzyme catalyses ATP + protein L-histidine = ADP + protein N-phospho-L-histidine.. This is an uncharacterized protein from Rhizobium meliloti (strain 1021) (Ensifer meliloti).